An 800-amino-acid polypeptide reads, in one-letter code: Kolavenyl diphosphate synthase TPS5, chloroplastic (800 aa).

Residues methionine 1–aspartate 75 constitute a chloroplast transit peptide. Residue lysine 244 participates in substrate binding. Residues aspartate 375 and aspartate 377 each coordinate Mg(2+). The short motif at aspartate 375–aspartate 378 is the DXDD motif element. Lysine 461 contacts substrate.

The protein belongs to the terpene synthase family. Mg(2+) serves as cofactor. Mostly expressed in trichomes of leaves and fruits.

The protein resides in the plastid. It localises to the chloroplast. The catalysed reaction is (2E,6E,10E)-geranylgeranyl diphosphate = (+)-kolavenyl diphosphate. It participates in secondary metabolite biosynthesis; terpenoid biosynthesis. In terms of biological role, involved in the biosynthesis of labdane-type diterpenoid including cleroda-dienols, and peregrinol lactones and furan derivatives, dopaminergic diterpenoids that can bind to dopamine receptors in the human pituitary gland, have probably ability to lower prolactin levels, and are used to treat menstrual cycle disorders (e.g. premenstrual syndrome and mastodynia). Terpene synthase that produces kolavenyl diphosphate from geranylgeranyl diphosphate (GGPP). The protein is Kolavenyl diphosphate synthase TPS5, chloroplastic of Vitex agnus-castus (Chaste tree).